Here is a 280-residue protein sequence, read N- to C-terminus: Soluble inorganic pyrophosphatase 1, chloroplastic (280 aa).

Arginine 120 is a binding site for diphosphate. Residues aspartate 152, aspartate 157, and aspartate 189 each contribute to the Mg(2+) site.

In terms of assembly, monomer. It depends on Mg(2+) as a cofactor. The N-terminus is blocked.

The protein resides in the plastid. It localises to the chloroplast. It carries out the reaction diphosphate + H2O = 2 phosphate + H(+). The chain is Soluble inorganic pyrophosphatase 1, chloroplastic (ppa1) from Chlamydomonas reinhardtii (Chlamydomonas smithii).